Here is a 701-residue protein sequence, read N- to C-terminus: L-glutamate oxidase precursor (701 aa).

The N-terminal stretch at 1 to 14 (MTTDTARRHTGAER) is a signal peptide. A69, E88, A89, R97, M123, R124, M354, and S409 together coordinate FAD. Residues 481–520 (LALPQSVRNLPTGLLGAHPSVDESRIGEEQVEYYRNSELR) constitute a propeptide that is removed on maturation. FAD-binding residues include E645, W653, and I654. Positions 684 to 701 (RRGAAAATEPMREEALTS) are excised as a propeptide.

It belongs to the flavin monoamine oxidase family. LGOX subfamily. The LGOX precursor forms homodimers. The mature enzyme is a heterohexamer composed of 2 alpha chains, 2 beta chains and 2 gamma chains (alpha2beta2gamma2). It depends on FAD as a cofactor. In terms of processing, the precursor form is proteolytically cleaved by an endopeptidase into alpha, beta and gamma chains, which form the stable mature enzyme. Activation by proteolysis occurs after secretion.

It localises to the secreted. The catalysed reaction is L-glutamate + O2 + H2O = H2O2 + 2-oxoglutarate + NH4(+). With respect to regulation, produced as a single polypeptide precursor and is activated by proteolytic cleavage. The LGOX precursor is an active enzyme, but it exhibits lower catalytic efficiency and lower thermostability compared with the mature hexameric LGOX. The mature form is strongly inhibited by p-chloromercuribenzoate, but not by CuCl(2), EDTA and diethyldithiocarbamate. Functionally, catalyzes the oxidative deamination of L-glutamate to 2-ketoglutarate along with the production of ammonia and hydrogen peroxide. Shows strict substrate specificity for L-glutamate, and exhibits only very weak activity with L-aspartate. The chain is L-glutamate oxidase precursor from Streptomyces sp.